The chain runs to 6919 residues: Nonribosomal peptide synthetase easA (6919 aa).

One can recognise a Carrier 1 domain in the interval 17–93; it reads TNNEVVEKDI…ELCQSVKLAE (77 aa). Ser54 carries the O-(pantetheine 4'-phosphoryl)serine modification. Residues 123–427 are epimerization 1; it reads EAQKLYASTK…FLRKVKDTRM (305 aa). The interval 294-319 is disordered; sequence FRRSTPVESTNDERNTNERQHNRHQN. The span at 304–319 shows a compositional bias: basic and acidic residues; sequence NDERNTNERQHNRHQN. The interval 604–981 is condensation 1; sequence LNVELDCGRL…ISTTQEINQL (378 aa). Positions 1003–1394 are adenylation 1; sequence QRLRRPDAWA…GRRDTQIKVR (392 aa). Residues 1531-1608 enclose the Carrier 2 domain; it reads EPETLLERQV…QLAQTAEVKD (78 aa). Ser1569 bears the O-(pantetheine 4'-phosphoryl)serine mark. Residues 1617–2031 are epimerization 2; sequence LLSPMQKWYF…ANAISALGTE (415 aa). A condensation 2 region spans residues 2072–2509; it reads VEDIYPCSPI…VGQLNTVTPK (438 aa). Residues 2541-2930 form an adenylation 2 region; it reads RPNATAVCAW…ARKDSQVKVR (390 aa). Residues 3067–3143 enclose the Carrier 3 domain; that stretch reads APSTFMEKKL…EMAAHLEAQM (77 aa). The residue at position 3104 (Ser3104) is an O-(pantetheine 4'-phosphoryl)serine. Residues 3188–3599 form a condensation 3 region; that stretch reads EDVYPCTPLQ…LLSKDEARRL (412 aa). The interval 3620–4018 is adenylation 3; sequence QHVSTNPYAP…GRRDGQVKIR (399 aa). Residues 4151 to 4228 form the Carrier 4 domain; it reads TPSTSEEKNI…QLAKKAVIKT (78 aa). Ser4188 carries the post-translational modification O-(pantetheine 4'-phosphoryl)serine. Residues 4282–4708 are condensation 4; sequence ESIYYCSPIQ…EIDVIPTGDV (427 aa). Residues 4732–5133 are adenylation 4; the sequence is EQALSQPGAQ…GRADGQIKIR (402 aa). The Carrier 5 domain occupies 5260–5337; that stretch reads ALSTETERRL…DMANTIANSE (78 aa). Ser5296 is modified (O-(pantetheine 4'-phosphoryl)serine). Residues 5380-5775 form a condensation 5 region; that stretch reads EDAYPCTPLQ…VFGQLQSAAN (396 aa). Residues 5824–6216 are adenylation 5; sequence SCPDAQAVHA…IGRRDTQVKI (393 aa). The Carrier 6 domain occupies 6344–6421; it reads EPATVTERLL…DMATLIDRKT (78 aa). Ser6381 bears the O-(pantetheine 4'-phosphoryl)serine mark.

The protein operates within antibiotic biosynthesis. Nonribosomal peptide synthetase; part of the gene cluster that mediates the biosynthesis of emericellamides, secondary metabolites acting as antibiotics. The biosynthesis of emericellamides initiates from the highly reducing polyketide synthase easB which catalyzes the formation of the linear polyketide chain. EasB produces several polyketides that can be further processed by the downstream enzymes. The polyketides are released from easB as linear polyketide carboxylic acids, which are converted to CoA thioesters by the acyl-CoA ligase easD. The substrates are then loaded onto the acyltransferase easC, which shuttles them to the first thiolation (T) domain of the nonribosomal peptide synthetase easA. EasA then performs condensation of the polyketides with one glycine, two alanine, one valine and one leucine residues. A last step of cyclization leads to the production of emericellamides. The polypeptide is Nonribosomal peptide synthetase easA (Emericella nidulans (strain FGSC A4 / ATCC 38163 / CBS 112.46 / NRRL 194 / M139) (Aspergillus nidulans)).